A 206-amino-acid polypeptide reads, in one-letter code: MVKIIGITGGSGSGKTTVVNKISEVIPEFVLISQDNYYKSVGDYEYEFLDVNFDHPDAFDNNLFYKHLKKLKENKLIHMPLYDFINHKRKDETVEIVPTPVVIVEGIMIFVEERVRNLIDLKIYIDTPNDIRFIRRLERDMSKRGRTLESVIEQYLSTTRAGYYRFIEPTKEYADLIIPEGGHNDKALYVLSSFLRTLGQESSVFF.

9-16 (GGSGSGKT) is an ATP binding site.

This sequence belongs to the uridine kinase family.

It is found in the cytoplasm. The enzyme catalyses uridine + ATP = UMP + ADP + H(+). It catalyses the reaction cytidine + ATP = CMP + ADP + H(+). The protein operates within pyrimidine metabolism; CTP biosynthesis via salvage pathway; CTP from cytidine: step 1/3. It participates in pyrimidine metabolism; UMP biosynthesis via salvage pathway; UMP from uridine: step 1/1. This chain is Uridine kinase, found in Borrelia turicatae (strain 91E135).